Here is a 252-residue protein sequence, read N- to C-terminus: MFS-type transporter cctQ (252 aa).

The next 2 membrane-spanning stretches (helical) occupy residues 54 to 74 and 116 to 136; these read IGSL…VVLP and FGSF…IVGF. Asparagine 179 is a glycosylation site (N-linked (GlcNAc...) asparagine). Helical transmembrane passes span 180 to 200 and 208 to 228; these read FSIC…WILA and FLVW…YFTT.

It belongs to the major facilitator superfamily.

Its subcellular location is the membrane. Its pathway is mycotoxin biosynthesis. In terms of biological role, MFS-type transporter; part of the gene cluster that mediates the biosynthesis of the mycotoxin cyclochlorotine, a hepatotoxic and carcinogenic cyclic chlorinated pentapeptide. Most likely responsible for cyclochlorotine secretion and thereby may contribute to intrinsic resistance. The sequence is that of MFS-type transporter cctQ from Talaromyces islandicus (Penicillium islandicum).